Reading from the N-terminus, the 183-residue chain is Glutathione-regulated potassium-efflux system ancillary protein KefG (183 aa).

Belongs to the NAD(P)H dehydrogenase (quinone) family. KefG subfamily. Interacts with KefB.

Its subcellular location is the cell inner membrane. The catalysed reaction is a quinone + NADH + H(+) = a quinol + NAD(+). It catalyses the reaction a quinone + NADPH + H(+) = a quinol + NADP(+). Its function is as follows. Regulatory subunit of a potassium efflux system that confers protection against electrophiles. Required for full activity of KefB. The protein is Glutathione-regulated potassium-efflux system ancillary protein KefG of Salmonella paratyphi C (strain RKS4594).